We begin with the raw amino-acid sequence, 370 residues long: Peridinin-chlorophyll a-binding protein 1, chloroplastic (370 aa).

The N-terminal 57 residues, methionine 1–alanine 57, are a transit peptide targeting the chloroplast. 2 tandem repeats follow at residues aspartate 58 to glycine 220 and aspartate 221 to arginine 370.

In terms of assembly, homotrimer.

Its subcellular location is the plastid. It localises to the chloroplast. In terms of biological role, water-soluble antenna for capture of solar energy in the blue-green range. Peridinin is an asymmetric carotenoid. This chain is Peridinin-chlorophyll a-binding protein 1, chloroplastic, found in Amphidinium carterae (Dinoflagellate).